The chain runs to 199 residues: Superoxide dismutase [Fe] (199 aa).

Residues His28, His80, Asp162, and His166 each coordinate Fe cation.

The protein belongs to the iron/manganese superoxide dismutase family. As to quaternary structure, homodimer. The cofactor is Fe cation.

It is found in the cytoplasm. It catalyses the reaction 2 superoxide + 2 H(+) = H2O2 + O2. Destroys superoxide anion radicals which are normally produced within the cells and which are toxic to biological systems. This is Superoxide dismutase [Fe] (sodB) from Leptolyngbya boryana (Plectonema boryanum).